The primary structure comprises 66 residues: Large ribosomal subunit protein bL31 (66 aa).

Zn(2+) is bound by residues Cys16, Cys18, Cys36, and Cys39.

It belongs to the bacterial ribosomal protein bL31 family. Type A subfamily. In terms of assembly, part of the 50S ribosomal subunit. The cofactor is Zn(2+).

Its function is as follows. Binds the 23S rRNA. In Geobacillus kaustophilus (strain HTA426), this protein is Large ribosomal subunit protein bL31.